Here is a 1120-residue protein sequence, read N- to C-terminus: Cluster 41 polyketide synthase (1120 aa).

The Ketosynthase family 3 (KS3) domain maps to 7–430 (PHDVAVVGMG…GTVSHAIIEK (424 aa)). Catalysis depends on for beta-ketoacyl synthase activity residues Cys178, His313, and His353. The segment at 539–796 (VWVFSGHGAQ…TSAISAAAED (258 aa)) is malonyl-CoA:ACP transacylase (MAT) domain. Ser625 functions as the For acyl/malonyl transferase activity in the catalytic mechanism. Residues 804–943 (IKKILSMESR…IAMQWTSWRE (140 aa)) are ketoreductase (KR) domain. Positions 1042 to 1116 (DSLSRQVREC…HIVKWLMEKT (75 aa)) constitute a Carrier domain. Residue Ser1076 is modified to O-(pantetheine 4'-phosphoryl)serine.

Polyketide synthase; part of the gene cluster 41 that mediates the biosynthesis of an extracellular and diffusible metabolite that is able to stimulate colony sclerotial production. The protein is Cluster 41 polyketide synthase of Aspergillus flavus (strain ATCC 200026 / FGSC A1120 / IAM 13836 / NRRL 3357 / JCM 12722 / SRRC 167).